The sequence spans 221 residues: Transmembrane protein 267 (221 aa).

Transmembrane regions (helical) follow at residues 28 to 48 (ASAGLGAFCFVADHFLTLPFI), 57 to 77 (LFDNTVHAIIGLWSWAIVIGL), 86 to 106 (VILAGFLASVIDLDHFYMAGS), 121 to 141 (LHCSTLIPALCFSLRLLMWAC), and 182 to 204 (ISYWLYVTITATLPHLCSVLMYL).

Its subcellular location is the membrane. The sequence is that of Transmembrane protein 267 (tmem267) from Danio rerio (Zebrafish).